Reading from the N-terminus, the 422-residue chain is Serine hydroxymethyltransferase (422 aa).

(6S)-5,6,7,8-tetrahydrofolate contacts are provided by residues Leu-118 and 122–124 (GHL). An N6-(pyridoxal phosphate)lysine modification is found at Lys-227. Residues Glu-243 and 351 to 353 (SPF) each bind (6S)-5,6,7,8-tetrahydrofolate.

This sequence belongs to the SHMT family. As to quaternary structure, homodimer. Pyridoxal 5'-phosphate serves as cofactor.

Its subcellular location is the cytoplasm. The catalysed reaction is (6R)-5,10-methylene-5,6,7,8-tetrahydrofolate + glycine + H2O = (6S)-5,6,7,8-tetrahydrofolate + L-serine. It functions in the pathway one-carbon metabolism; tetrahydrofolate interconversion. Its pathway is amino-acid biosynthesis; glycine biosynthesis; glycine from L-serine: step 1/1. Functionally, catalyzes the reversible interconversion of serine and glycine with tetrahydrofolate (THF) serving as the one-carbon carrier. This reaction serves as the major source of one-carbon groups required for the biosynthesis of purines, thymidylate, methionine, and other important biomolecules. Also exhibits THF-independent aldolase activity toward beta-hydroxyamino acids, producing glycine and aldehydes, via a retro-aldol mechanism. The protein is Serine hydroxymethyltransferase of Kosmotoga olearia (strain ATCC BAA-1733 / DSM 21960 / TBF 19.5.1).